A 156-amino-acid chain; its full sequence is 6,7-dimethyl-8-ribityllumazine synthase (156 aa).

5-amino-6-(D-ribitylamino)uracil-binding positions include F23, 57-59, and 81-83; these read AFE and AII. Position 86–87 (86–87) interacts with (2S)-2-hydroxy-3-oxobutyl phosphate; sequence ST. Residue H89 is the Proton donor of the active site. F114 lines the 5-amino-6-(D-ribitylamino)uracil pocket. R128 contacts (2S)-2-hydroxy-3-oxobutyl phosphate.

The protein belongs to the DMRL synthase family.

It carries out the reaction (2S)-2-hydroxy-3-oxobutyl phosphate + 5-amino-6-(D-ribitylamino)uracil = 6,7-dimethyl-8-(1-D-ribityl)lumazine + phosphate + 2 H2O + H(+). The protein operates within cofactor biosynthesis; riboflavin biosynthesis; riboflavin from 2-hydroxy-3-oxobutyl phosphate and 5-amino-6-(D-ribitylamino)uracil: step 1/2. Catalyzes the formation of 6,7-dimethyl-8-ribityllumazine by condensation of 5-amino-6-(D-ribitylamino)uracil with 3,4-dihydroxy-2-butanone 4-phosphate. This is the penultimate step in the biosynthesis of riboflavin. In Wolinella succinogenes (strain ATCC 29543 / DSM 1740 / CCUG 13145 / JCM 31913 / LMG 7466 / NCTC 11488 / FDC 602W) (Vibrio succinogenes), this protein is 6,7-dimethyl-8-ribityllumazine synthase.